The sequence spans 361 residues: Phospho-N-acetylmuramoyl-pentapeptide-transferase (361 aa).

10 helical membrane passes run 25-45 (RAVL…PAVI), 73-93 (TMGG…WADL), 97-117 (YVWL…VDDW), 134-154 (YFWQ…TASL), 168-188 (ATFG…IVGA), 200-220 (GLAI…AYVA), 237-257 (AGEL…FLWF), 264-284 (VFMG…VAVV), 289-309 (IILF…MIQV), and 338-358 (QVVV…LSSL).

Belongs to the glycosyltransferase 4 family. MraY subfamily. Mg(2+) is required as a cofactor.

The protein resides in the cell inner membrane. It catalyses the reaction UDP-N-acetyl-alpha-D-muramoyl-L-alanyl-gamma-D-glutamyl-meso-2,6-diaminopimeloyl-D-alanyl-D-alanine + di-trans,octa-cis-undecaprenyl phosphate = di-trans,octa-cis-undecaprenyl diphospho-N-acetyl-alpha-D-muramoyl-L-alanyl-D-glutamyl-meso-2,6-diaminopimeloyl-D-alanyl-D-alanine + UMP. It functions in the pathway cell wall biogenesis; peptidoglycan biosynthesis. Its function is as follows. Catalyzes the initial step of the lipid cycle reactions in the biosynthesis of the cell wall peptidoglycan: transfers peptidoglycan precursor phospho-MurNAc-pentapeptide from UDP-MurNAc-pentapeptide onto the lipid carrier undecaprenyl phosphate, yielding undecaprenyl-pyrophosphoryl-MurNAc-pentapeptide, known as lipid I. The chain is Phospho-N-acetylmuramoyl-pentapeptide-transferase from Thiobacillus denitrificans (strain ATCC 25259 / T1).